The chain runs to 575 residues: uncharacterized protein (575 aa).

Positions 1-120 (MKLIEHYVAL…YNMWLSEVFG (120 aa)) constitute an HTH marR-type domain. The segment at residues 26–49 (LTEIADCLFCTERNAKLILHKLEN) is a DNA-binding region (H-T-H motif). The interval 176–490 (EPKPHLVHGW…FGFLHLLLSE (315 aa)) is solute-binding region.

The protein in the C-terminal section; belongs to the bacterial solute-binding protein 5 family.

This is an uncharacterized protein from Bacillus subtilis (strain 168).